The sequence spans 417 residues: Transmembrane protease serine 11G (417 aa).

The Cytoplasmic portion of the chain corresponds to 1 to 22 (MYQPGILGRRKRVCKPWTVALT). Residues 23-43 (TTAALLALAVLIGLLVYFLVY) traverse the membrane as a helical; Signal-anchor for type II membrane protein segment. The Extracellular segment spans residues 44–417 (EEKTHYYQAS…RNWIKSKTNI (374 aa)). The region spanning 46–165 (KTHYYQASFW…PYLREMNAAQ (120 aa)) is the SEA domain. In terms of domain architecture, Peptidase S1 spans 186–416 (IADGKPAGSN…YRNWIKSKTN (231 aa)). Cys211 and Cys227 are disulfide-bonded. Active-site charge relay system residues include His226 and Asp271. Disulfide bonds link Cys336–Cys352 and Cys363–Cys392. Ser367 (charge relay system) is an active-site residue.

Belongs to the peptidase S1 family. In terms of tissue distribution, highest expression in lung and tongue. Also expressed in brain, colon, heart and liver. Isoform 1 is the predominant form in tongue whereas both isoforms are expressed in similar amounts in lung. At the cellular level, expression is confined to epithelial cells within the cleft of the circumvallate papillae extending into the ducts of the minor salivary glands, the respiratory epithelium of the nasal cavity and tear gland ducts.

The protein localises to the membrane. The sequence is that of Transmembrane protease serine 11G (Tmprss11g) from Rattus norvegicus (Rat).